The sequence spans 190 residues: Large ribosomal subunit protein uL5 (190 aa).

The protein belongs to the universal ribosomal protein uL5 family. As to quaternary structure, part of the 50S ribosomal subunit; part of the 5S rRNA/L5/L18/L25 subcomplex. Contacts the 5S rRNA and the P site tRNA. Forms a bridge to the 30S subunit in the 70S ribosome.

Functionally, this is one of the proteins that bind and probably mediate the attachment of the 5S RNA into the large ribosomal subunit, where it forms part of the central protuberance. In the 70S ribosome it contacts protein S13 of the 30S subunit (bridge B1b), connecting the 2 subunits; this bridge is implicated in subunit movement. Contacts the P site tRNA; the 5S rRNA and some of its associated proteins might help stabilize positioning of ribosome-bound tRNAs. This is Large ribosomal subunit protein uL5 from Bifidobacterium longum (strain DJO10A).